The chain runs to 363 residues: mRNA decay activator protein ZFP36L2-A (363 aa).

Positions 131 to 136 (RYKTEL) match the RNA-binding motif. 2 consecutive C3H1-type zinc fingers follow at residues 131–159 (RYKTELCRPFEESGACKYGEKCQFAHGFH) and 169–197 (KYKTELCRTFHTIGFCPYGPRCHFIHNAE). An RNA-binding region spans residues 148–189 (YGEKCQFAHGFHELRSLTRHPKYKTELCRTFHTIGFCPYGPR). The interval 308–349 (ESPVFDAPPSPPDSLSDRDSYLSGSLSSGSLSGSDSPTLDSN) is disordered. Residues 328 to 347 (YLSGSLSSGSLSGSDSPTLD) show a composition bias toward low complexity.

In terms of processing, phosphorylated. As to expression, widely expressed in adults.

Its subcellular location is the nucleus. The protein localises to the cytoplasm. Functionally, zinc-finger RNA-binding protein that destabilizes several cytoplasmic AU-rich element (ARE)-containing mRNA transcripts by promoting their poly(A) tail removal or deadenylation, and hence provide a mechanism for attenuating protein synthesis. Acts as a 3'-untranslated region (UTR) ARE mRNA-binding adapter protein to communicate signaling events to the mRNA decay machinery. Functions by recruiting the CCR4-NOT deadenylase complex and probably other components of the cytoplasmic RNA decay machinery to the bound ARE-containing mRNAs, and hence promotes ARE-mediated mRNA deadenylation and decay processes. Binds to 3'-UTR ARE of numerous mRNAs. Also induces the degradation of ARE-containing mRNAs even in absence of poly(A) tail. Required for tubulogenesis during pronephros development. The chain is mRNA decay activator protein ZFP36L2-A (zfp36l2-A) from Xenopus laevis (African clawed frog).